The following is a 522-amino-acid chain: Bifunctional purine biosynthesis protein PurH (522 aa).

The region spanning 1-145 (MKPIARALIS…KNHAAVTVIV (145 aa)) is the MGS-like domain.

This sequence belongs to the PurH family.

The catalysed reaction is (6R)-10-formyltetrahydrofolate + 5-amino-1-(5-phospho-beta-D-ribosyl)imidazole-4-carboxamide = 5-formamido-1-(5-phospho-D-ribosyl)imidazole-4-carboxamide + (6S)-5,6,7,8-tetrahydrofolate. It carries out the reaction IMP + H2O = 5-formamido-1-(5-phospho-D-ribosyl)imidazole-4-carboxamide. It functions in the pathway purine metabolism; IMP biosynthesis via de novo pathway; 5-formamido-1-(5-phospho-D-ribosyl)imidazole-4-carboxamide from 5-amino-1-(5-phospho-D-ribosyl)imidazole-4-carboxamide (10-formyl THF route): step 1/1. It participates in purine metabolism; IMP biosynthesis via de novo pathway; IMP from 5-formamido-1-(5-phospho-D-ribosyl)imidazole-4-carboxamide: step 1/1. This chain is Bifunctional purine biosynthesis protein PurH, found in Nitrosococcus oceani (strain ATCC 19707 / BCRC 17464 / JCM 30415 / NCIMB 11848 / C-107).